A 475-amino-acid polypeptide reads, in one-letter code: Glycogen synthase (475 aa).

K15 contacts ADP-alpha-D-glucose.

This sequence belongs to the glycosyltransferase 1 family. Bacterial/plant glycogen synthase subfamily.

It carries out the reaction [(1-&gt;4)-alpha-D-glucosyl](n) + ADP-alpha-D-glucose = [(1-&gt;4)-alpha-D-glucosyl](n+1) + ADP + H(+). It participates in glycan biosynthesis; glycogen biosynthesis. Its function is as follows. Synthesizes alpha-1,4-glucan chains using ADP-glucose. The protein is Glycogen synthase of Chlamydia abortus (strain DSM 27085 / S26/3) (Chlamydophila abortus).